The following is a 348-amino-acid chain: D-alanine--D-alanine ligase (348 aa).

The ATP-grasp domain occupies 132 to 334; sequence KRVLESAGIP…YAELIEELVR (203 aa). 162–217 lines the ATP pocket; sequence EAVLSYPVFVKPANMGSSVGISKAESEEELRAAILLALTYDSRILIEQGVLAREIE. Positions 288, 301, and 303 each coordinate Mg(2+).

Belongs to the D-alanine--D-alanine ligase family. It depends on Mg(2+) as a cofactor. The cofactor is Mn(2+).

The protein resides in the cytoplasm. It catalyses the reaction 2 D-alanine + ATP = D-alanyl-D-alanine + ADP + phosphate + H(+). It functions in the pathway cell wall biogenesis; peptidoglycan biosynthesis. Cell wall formation. The sequence is that of D-alanine--D-alanine ligase from Streptococcus equi subsp. equi (strain 4047).